Consider the following 248-residue polypeptide: MITERVKMEVIGLEIPLISGNEDYTLAELISKYPLKDKDIIVIAETVVSKSEKNVILKDTIKPSNEAIELSKKLGKEPEVVQVILDESNETVRLGPNFIVTETKHGFVCANSGVDESNTSKGIKPLPKNPDKSANEIRKGIEEITGKNVGVIINDSMGRPFRKGSCGVAIGVSGVCGLWDRKGEKDLFGRELKTTEVGIADELAATASVVMGQSNEGIPLVIIRNAPVPFNDGTGKELIRKKEEDVFR.

GTP is bound by residues I15–I18, E45–T46, and K50. D115 provides a ligand contact to a divalent metal cation. GTP is bound at residue N118. A divalent metal cation-binding residues include D155, S156, and Q213. M211–I218 contributes to the GTP binding site.

The protein belongs to the CofE family. As to quaternary structure, homodimer. Mg(2+) serves as cofactor. Mn(2+) is required as a cofactor. The cofactor is K(+).

The enzyme catalyses oxidized coenzyme F420-0 + GTP + L-glutamate = oxidized coenzyme F420-1 + GDP + phosphate + H(+). The catalysed reaction is oxidized coenzyme F420-1 + GTP + L-glutamate = oxidized coenzyme F420-2 + GDP + phosphate + H(+). Its pathway is cofactor biosynthesis; coenzyme F420 biosynthesis. Catalyzes the GTP-dependent successive addition of two or more gamma-linked L-glutamates to the L-lactyl phosphodiester of 7,8-didemethyl-8-hydroxy-5-deazariboflavin (F420-0) to form coenzyme F420-0-glutamyl-glutamate (F420-2) or polyglutamated F420 derivatives. This is Coenzyme F420:L-glutamate ligase from Methanococcus maripaludis (strain C7 / ATCC BAA-1331).